A 673-amino-acid chain; its full sequence is G-protein-signaling modulator 1 (673 aa).

The segment at methionine 1–arginine 507 is mediates association with membranes. TPR repeat units lie at residues cysteine 28–aspartate 61, serine 66–isoleucine 99, alanine 106–glutamine 139, alanine 146–valine 178, glutamate 180–leucine 199, glycine 206–phenylalanine 239, arginine 246–isoleucine 279, alanine 286–leucine 319, and glycine 326–isoleucine 359. The interval aspartate 361–isoleucine 485 is interaction with STK11/LKB1. At serine 410 the chain carries Phosphoserine. Arginine 418 is modified (omega-N-methylarginine). A compositionally biased stretch (basic and acidic residues) spans proline 420–serine 439. Residues proline 420–arginine 477 form a disordered region. 5 positions are modified to phosphoserine: serine 442, serine 467, serine 469, serine 490, and serine 491. The segment covering lysine 451–serine 467 has biased composition (basic and acidic residues). Residues glutamate 493–leucine 515 form the GoLoco 1 domain. The tract at residues aspartate 510 to proline 544 is disordered. The span at glutamate 516–threonine 530 shows a compositional bias: low complexity. Residues serine 543 and serine 567 each carry the phosphoserine modification. 3 GoLoco domains span residues threonine 546–valine 568, glycine 594–proline 616, and aspartate 628–leucine 650. Disordered stretches follow at residues isoleucine 609–aspartate 628 and glutamate 645–serine 673. A Phosphoserine modification is found at serine 653.

This sequence belongs to the GPSM family. Interacts with INSC/inscuteable and FRMPD1. Interacts with GNAI1, GNAI2 and GNAI3 preferentially in their GDP-bound state. May also interact with GNAO1. Interacts with STK11/LKB1 and MACF1. Post-translationally, phosphorylation regulates interaction with G(i/o) alpha. In terms of tissue distribution, isoform 4 is specifically expressed in brain by neurons and also detected in testis, liver, kidney, heart and pancreas (at protein level). Highly expressed in cerebellum and subventricular zone-olfactory bulb system. Isoform 2 and isoform 3 are specifically expressed in heart and are also detected in brain.

The protein resides in the endoplasmic reticulum membrane. It localises to the golgi apparatus membrane. Its subcellular location is the cell membrane. The protein localises to the cytoplasm. It is found in the cytosol. Guanine nucleotide dissociation inhibitor (GDI) which functions as a receptor-independent activator of heterotrimeric G-protein signaling. Keeps G(i/o) alpha subunit in its GDP-bound form thus uncoupling heterotrimeric G-proteins signaling from G protein-coupled receptors. Controls spindle orientation and asymmetric cell fate of cerebral cortical progenitors. May also be involved in macroautophagy in intestinal cells. May play a role in drug addiction. This Rattus norvegicus (Rat) protein is G-protein-signaling modulator 1 (Gpsm1).